The following is a 222-amino-acid chain: Ktr system potassium uptake protein A (222 aa).

The region spanning 6 to 122 is the RCK N-terminal domain; the sequence is NKQFAVIGLG…LEKIGADRII (117 aa). NAD(+) is bound by residues Arg-16, 36-38, 56-57, 78-80, 103-105, His-109, and Glu-125; these read DIN, NA, IGA, and KAQ. The RCK C-terminal domain maps to 139-222; that stretch reads ENVLNYIDLS…DIKRFENEGM (84 aa).

This sequence belongs to the KtrA potassium transport family. As to quaternary structure, homodimer, tetramer (dimer of homodimer) and octamer (tetramer of homodimer). Part of the KtrAB complex formed by an octameric catalytic ring of KtrA and a membrane associated dimer of KtrB forming a potassium channel.

The protein resides in the cell membrane. In terms of biological role, catalytic subunit of the KtrAB potassium uptake transporter. The 2 major potassium transporter complexes KtrAB and KtrCD confer resistance to both suddenly imposed and prolonged osmotic stress. The polypeptide is Ktr system potassium uptake protein A (ktrA) (Bacillus subtilis (strain 168)).